Consider the following 987-residue polypeptide: Eukaryotic translation initiation factor 3 subunit A (987 aa).

A coiled-coil region spans residues 93-122; that stretch reads LHLATDKAEQARSQADALEEALDVDDLEAD. The PCI domain occupies 316–513; the sequence is LQLIASSVVL…GVVIFGNLGI (198 aa). Coiled-coil stretches lie at residues 556-742 and 797-858; these read TVEK…EKNR and LKIE…REEL. The segment covering 808–859 has biased composition (basic and acidic residues); the sequence is QEEEEARKQEEAERLKKVEAERKANLDKAFEKQRQREIELEEKSRREREELL. Residues 808–987 form a disordered region; the sequence is QEEEEARKQE…GSSRPRPTQR (180 aa). Low complexity predominate over residues 872 to 894; sequence PTVTPVGTTAPAAAAAAAGAPAA. 2 stretches are compositionally biased toward polar residues: residues 905–916 and 976–987; these read TEVSGPSAPTSS and TFGSSRPRPTQR.

This sequence belongs to the eIF-3 subunit A family. In terms of assembly, component of the eukaryotic translation initiation factor 3 (eIF-3) complex. Binds to the translation initiation factor TIF3H1.

It is found in the cytoplasm. In terms of biological role, RNA-binding component of the eukaryotic translation initiation factor 3 (eIF-3) complex, which is involved in protein synthesis of a specialized repertoire of mRNAs and, together with other initiation factors, stimulates binding of mRNA and methionyl-tRNAi to the 40S ribosome. The eIF-3 complex specifically targets and initiates translation of a subset of mRNAs involved in cell proliferation. The protein is Eukaryotic translation initiation factor 3 subunit A (TIF3A1) of Arabidopsis thaliana (Mouse-ear cress).